The sequence spans 61 residues: Truncated 3-beta hydroxy-5-ene steroid dehydrogenase homolog (61 aa).

It belongs to the 3-beta-HSD family.

This chain is Truncated 3-beta hydroxy-5-ene steroid dehydrogenase homolog, found in Variola virus (isolate Human/India/Ind3/1967) (VARV).